We begin with the raw amino-acid sequence, 148 residues long: Large ribosomal subunit protein bL9 (148 aa).

Belongs to the bacterial ribosomal protein bL9 family.

Functionally, binds to the 23S rRNA. In Parafrankia sp. (strain EAN1pec), this protein is Large ribosomal subunit protein bL9.